The sequence spans 140 residues: Methylglyoxal synthase (140 aa).

An MGS-like domain is found at 1–140 (MKIALIAHDK…RGRKGEINGL (140 aa)). Residues H8, K12, 34 to 37 (TGTT), and 54 to 55 (SG) each bind substrate. D60 serves as the catalytic Proton donor/acceptor. Residue H87 participates in substrate binding.

This sequence belongs to the methylglyoxal synthase family.

It catalyses the reaction dihydroxyacetone phosphate = methylglyoxal + phosphate. Catalyzes the formation of methylglyoxal from dihydroxyacetone phosphate. In Geobacillus sp. (strain WCH70), this protein is Methylglyoxal synthase.